The sequence spans 191 residues: Calcium and integrin-binding protein 1 (191 aa).

The N-myristoyl glycine moiety is linked to residue Gly2. EF-hand domains follow at residues 103 to 138 (TPDI…LTGE) and 148 to 183 (EMKQ…SPDF). Ca(2+)-binding residues include Asp116, Asp118, Asp120, Thr122, Asp127, Asp161, Asp163, Asp165, Thr167, and Glu172.

Monomer. Interacts with the heterodimeric integrin alpha-IIb/beta3 (ITGA2B-ITGB3). Interacts with ITGA2B (via cytoplasmic domain); the interaction is direct and calcium-dependent. Interacts with the protein kinases PLK2/SNK and PRKDC (via the region immediately upstream of the kinase domain). Interacts with PLK3; the interaction inhibits PLK3 kinase activity. Interacts with PSEN2. Interacts (via C-terminus) with F8. Interacts with NBR1 (via C-terminus). Interacts with FEZ1 (via C-terminus). Interacts with UBR5 (via C-terminus); the interaction is sensitive to DNA damage, and may target CIB1 for ubiquitin-mediated degradation. Interacts with IFI6; the interaction is direct. Interacts with BCL2. Interacts with ITPR3; the interaction occurs in a calcium dependent manner. Interacts with PTK2/FAK1. Interacts with MAP3K5; the interaction inhibits MAP3K5 activation by phosphorylation, and its subsequent interaction with TRAF2. Interacts (via C-terminal region) with STMN2 (via the N-terminal region); the interaction is direct, occurs in a calcium-dependent manner and attenuates the STMN2-induced neurite outgrowth inhibition. Interacts with SPHK1, the interaction occurs in a calcium-dependent manner. Interacts with ITGA2B (via C-terminal cytoplasmic tail); the interaction occurs upon platelet aggregation and is stabilized/increased in a calcium and magnesium-dependent manner. Interacts with PAK1 (via N-terminal region); the interaction is direct and occurs in a calcium-dependent manner. Interacts with RAC3 (via C-terminal region); the interaction induces their association with the cytoskeleton upon alpha-IIb/beta3 integrin-mediated adhesion. Interacts with ITGA5 and ITGAV. Interacts with MYO1C. Interacts with ITGA2B (via C-terminal cytoplasmic tail region). Interacts (via C-terminal region) with PPP3R1; the interaction increases upon cardiomyocytes hypertrophy. Interacts with CACNA1C; the interaction increases upon cardiomyocytes hypertrophy. Interacts with TAS1R2 (via C-terminus); this interaction is independent of the myristoylation state of CIB1. Interacts and forms a complex with TMC6 and TMC8; the interaction stabilizes each component of the complex.

The protein localises to the membrane. It is found in the cell membrane. Its subcellular location is the sarcolemma. The protein resides in the apical cell membrane. It localises to the cell projection. The protein localises to the ruffle membrane. It is found in the filopodium tip. Its subcellular location is the growth cone. The protein resides in the lamellipodium. It localises to the cytoplasm. The protein localises to the cytoskeleton. It is found in the microtubule organizing center. Its subcellular location is the centrosome. The protein resides in the perinuclear region. It localises to the nucleus. The protein localises to the neuron projection. It is found in the perikaryon. In terms of biological role, calcium-binding protein that plays a role in the regulation of numerous cellular processes, such as cell differentiation, cell division, cell proliferation, cell migration, thrombosis, angiogenesis, cardiac hypertrophy and apoptosis. Involved in bone marrow megakaryocyte differentiation by negatively regulating thrombopoietin-mediated signaling pathway. Participates in the endomitotic cell cycle of megakaryocyte, a form of mitosis in which both karyokinesis and cytokinesis are interrupted. Plays a role in integrin signaling by negatively regulating alpha-IIb/beta3 activation in thrombin-stimulated megakaryocytes preventing platelet aggregation. Up-regulates PTK2/FAK1 activity, and is also needed for the recruitment of PTK2/FAK1 to focal adhesions; it thus appears to play an important role in focal adhesion formation. Positively regulates cell migration on fibronectin in a CDC42-dependent manner, the effect being negatively regulated by PAK1. Functions as a negative regulator of stress activated MAP kinase (MAPK) signaling pathways. Down-regulates inositol 1,4,5-trisphosphate receptor-dependent calcium signaling. Involved in sphingosine kinase SPHK1 translocation to the plasma membrane in a N-myristoylation-dependent manner preventing TNF-alpha-induced apoptosis. Regulates serine/threonine-protein kinase PLK3 activity for proper completion of cell division progression. Plays a role in microtubule (MT) dynamics during neuronal development; disrupts the MT depolymerization activity of STMN2 attenuating NGF-induced neurite outgrowth and the MT reorganization at the edge of lamellipodia. Promotes cardiomyocyte hypertrophy via activation of the calcineurin/NFAT signaling pathway. Stimulates calcineurin PPP3R1 activity by mediating its anchoring to the sarcolemma. In ischemia-induced (pathological or adaptive) angiogenesis, stimulates endothelial cell proliferation, migration and microvessel formation by activating the PAK1 and ERK1/ERK2 signaling pathway. Also promotes cancer cell survival and proliferation. May regulate cell cycle and differentiation of spermatogenic germ cells, and/or differentiation of supporting Sertoli cells. Forms a complex with TMC6/EVER1 and TMC8/EVER2 in lymphocytes and keratynocytes where CIB1 stabilizes TMC6 and TMC8 levels and reciprocally. The polypeptide is Calcium and integrin-binding protein 1 (CIB1) (Bos taurus (Bovine)).